Consider the following 360-residue polypeptide: Decorin (360 aa).

Residues Met-1–Ala-16 form the signal peptide. Residues Gly-17–Glu-30 constitute a propeptide that is removed on maturation. O-linked (Xyl...) (glycosaminoglycan) serine glycosylation occurs at Ser-34. Intrachain disulfides connect Cys-55-Cys-61 and Cys-59-Cys-68. LRR repeat units follow at residues Glu-74–Ile-94, Thr-95–Ile-118, Ser-119–Leu-142, Lys-143–Ile-163, Thr-164–Leu-187, Lys-188–Ile-213, Thr-214–Ile-234, Thr-235–Ile-258, Ser-259–Leu-282, Val-283–Ile-305, Ser-306–Val-335, and Gln-336–Lys-360. Asn-212 is a glycosylation site (N-linked (GlcNAc...) asparagine). N-linked (GlcNAc...) asparagine glycans are attached at residues Asn-263 and Asn-304. A disulfide bridge connects residues Cys-314 and Cys-347.

This sequence belongs to the small leucine-rich proteoglycan (SLRP) family. SLRP class I subfamily. As to quaternary structure, binds to type I and type II collagen, fibronectin and TGF-beta. Forms a ternary complex with MFAP2 and ELN. Interacts with DPT. In terms of processing, the attached glycosaminoglycan chain can be either chondroitin sulfate or dermatan sulfate depending upon the tissue of origin.

The protein localises to the secreted. Its subcellular location is the extracellular space. It localises to the extracellular matrix. Functionally, may affect the rate of fibrils formation. The protein is Decorin (DCN) of Ovis aries (Sheep).